A 351-amino-acid polypeptide reads, in one-letter code: Ferrochelatase (351 aa).

The Fe cation site is built by histidine 184 and glutamate 265.

Belongs to the ferrochelatase family.

The protein resides in the cytoplasm. The catalysed reaction is heme b + 2 H(+) = protoporphyrin IX + Fe(2+). Its pathway is porphyrin-containing compound metabolism; protoheme biosynthesis; protoheme from protoporphyrin-IX: step 1/1. Catalyzes the ferrous insertion into protoporphyrin IX. The sequence is that of Ferrochelatase from Rhodopirellula baltica (strain DSM 10527 / NCIMB 13988 / SH1).